We begin with the raw amino-acid sequence, 353 residues long: Aliphatic aldoxime dehydratase (353 aa).

Serine 219 serves as a coordination point for an aliphatic aldoxime. Histidine 299 contributes to the heme b binding site. An an aliphatic aldoxime-binding site is contributed by histidine 320. Histidine 320 is a catalytic residue.

It belongs to the heme-containing dehydratase family. Homodimer. The cofactor is heme b.

The catalysed reaction is an aliphatic aldoxime = a nitrile + H2O. With respect to regulation, active when the heme iron is in the ferrous state. Activated by FMN, Fe(2+), Sn(2+), Na(2)SO(3), Na(2)S and vitamin K3. Its function is as follows. Catalyzes the dehydration of aldoximes to their corresponding nitrile. Is active toward various arylalkyl- and alkyl-aldoximes, and to a lesser extent toward aryl-aldoximes. The protein is Aliphatic aldoxime dehydratase of Rhodococcus globerulus.